The sequence spans 467 residues: ATP synthase subunit beta (467 aa).

154-161 is an ATP binding site; it reads GGAGVGKT.

It belongs to the ATPase alpha/beta chains family. F-type ATPases have 2 components, CF(1) - the catalytic core - and CF(0) - the membrane proton channel. CF(1) has five subunits: alpha(3), beta(3), gamma(1), delta(1), epsilon(1). CF(0) has three main subunits: a(1), b(2) and c(9-12). The alpha and beta chains form an alternating ring which encloses part of the gamma chain. CF(1) is attached to CF(0) by a central stalk formed by the gamma and epsilon chains, while a peripheral stalk is formed by the delta and b chains.

It localises to the cell inner membrane. The enzyme catalyses ATP + H2O + 4 H(+)(in) = ADP + phosphate + 5 H(+)(out). In terms of biological role, produces ATP from ADP in the presence of a proton gradient across the membrane. The catalytic sites are hosted primarily by the beta subunits. The protein is ATP synthase subunit beta of Leptospira borgpetersenii serovar Hardjo-bovis (strain JB197).